The chain runs to 457 residues: Tubulin alpha chain (457 aa).

GTP contacts are provided by glutamine 12, glutamate 77, serine 146, glycine 150, threonine 151, threonine 186, asparagine 213, and asparagine 235. Glutamate 77 serves as a coordination point for Mg(2+).

The protein belongs to the tubulin family. In terms of assembly, dimer of alpha and beta chains. A typical microtubule is a hollow water-filled tube with an outer diameter of 25 nm and an inner diameter of 15 nM. Alpha-beta heterodimers associate head-to-tail to form protofilaments running lengthwise along the microtubule wall with the beta-tubulin subunit facing the microtubule plus end conferring a structural polarity. Microtubules usually have 13 protofilaments but different protofilament numbers can be found in some organisms and specialized cells. Mg(2+) serves as cofactor. Undergoes a tyrosination/detyrosination cycle, the cyclic removal and re-addition of a C-terminal tyrosine residue by the enzymes tubulin tyrosine carboxypeptidase (TTCP) and tubulin tyrosine ligase (TTL), respectively.

It localises to the cytoplasm. It is found in the cytoskeleton. The enzyme catalyses GTP + H2O = GDP + phosphate + H(+). Its function is as follows. Tubulin is the major constituent of microtubules, a cylinder consisting of laterally associated linear protofilaments composed of alpha- and beta-tubulin heterodimers. Microtubules grow by the addition of GTP-tubulin dimers to the microtubule end, where a stabilizing cap forms. Below the cap, tubulin dimers are in GDP-bound state, owing to GTPase activity of alpha-tubulin. The chain is Tubulin alpha chain (tubA) from Dictyostelium discoideum (Social amoeba).